Reading from the N-terminus, the 35-residue chain is Photosystem II reaction center protein M (35 aa).

A helical transmembrane segment spans residues isoleucine 5–isoleucine 25.

This sequence belongs to the PsbM family. In terms of assembly, PSII is composed of 1 copy each of membrane proteins PsbA, PsbB, PsbC, PsbD, PsbE, PsbF, PsbH, PsbI, PsbJ, PsbK, PsbL, PsbM, PsbT, PsbX, PsbY, PsbZ, Psb30/Ycf12, at least 3 peripheral proteins of the oxygen-evolving complex and a large number of cofactors. It forms dimeric complexes.

It is found in the plastid. Its subcellular location is the chloroplast thylakoid membrane. Functionally, one of the components of the core complex of photosystem II (PSII). PSII is a light-driven water:plastoquinone oxidoreductase that uses light energy to abstract electrons from H(2)O, generating O(2) and a proton gradient subsequently used for ATP formation. It consists of a core antenna complex that captures photons, and an electron transfer chain that converts photonic excitation into a charge separation. This subunit is found at the monomer-monomer interface. This Panax quinquefolius (American ginseng) protein is Photosystem II reaction center protein M.